The primary structure comprises 458 residues: NADH-ubiquinone oxidoreductase chain 4 (458 aa).

13 helical membrane passes run 23–43 (LLWT…TLTL), 59–79 (IDQF…LTIM), 99–119 (LLIL…LLMF), 148–168 (LYFL…LIMI), 174–194 (SLSI…TPWS), 197–217 (LWWI…IFHL), 227–247 (PIAG…YGMI), 260–280 (LAVP…SICL), 289–311 (IAYS…TPWA), 315–337 (ALAM…NITY), 355–375 (FPLM…LPPF), 396–416 (ILLL…MLIM), and 438–458 (LMLM…AIMI).

Belongs to the complex I subunit 4 family.

It is found in the mitochondrion membrane. The catalysed reaction is a ubiquinone + NADH + 5 H(+)(in) = a ubiquinol + NAD(+) + 4 H(+)(out). In terms of biological role, core subunit of the mitochondrial membrane respiratory chain NADH dehydrogenase (Complex I) that is believed to belong to the minimal assembly required for catalysis. Complex I functions in the transfer of electrons from NADH to the respiratory chain. The immediate electron acceptor for the enzyme is believed to be ubiquinone. The protein is NADH-ubiquinone oxidoreductase chain 4 (MT-ND4) of Petromyzon marinus (Sea lamprey).